We begin with the raw amino-acid sequence, 158 residues long: Ribosome maturation factor RimP (158 aa).

This sequence belongs to the RimP family.

Its subcellular location is the cytoplasm. In terms of biological role, required for maturation of 30S ribosomal subunits. The chain is Ribosome maturation factor RimP from Lactobacillus acidophilus (strain ATCC 700396 / NCK56 / N2 / NCFM).